The sequence spans 127 residues: Large ribosomal subunit protein bL20 (127 aa).

It belongs to the bacterial ribosomal protein bL20 family.

Its function is as follows. Binds directly to 23S ribosomal RNA and is necessary for the in vitro assembly process of the 50S ribosomal subunit. It is not involved in the protein synthesizing functions of that subunit. In Corynebacterium jeikeium (strain K411), this protein is Large ribosomal subunit protein bL20.